The following is a 390-amino-acid chain: Nuclear receptor subfamily 2 group F member 6 (390 aa).

Over residues 1–15 (MAMVTGGWGGPGGDT) the composition is skewed to gly residues. Residues 1–50 (MAMVTGGWGGPGGDTNGVDKAGGSYPRATEDDSASPPGATSDAEPGDEER) form a disordered region. Residues serine 35 and serine 41 each carry the phosphoserine modification. The nuclear receptor DNA-binding region spans 54–129 (QVDCVVCGDK…VGMRKEAVQP (76 aa)). 2 consecutive NR C4-type zinc fingers follow at residues 57–77 (CVVC…CEGC) and 93–117 (CRSN…LKKC). In terms of domain architecture, NR LBD spans 157 to 380 (PVSELIAQLL…TLIRDMLLSG (224 aa)). The interval 314 to 390 (LQEKAQVALT…STFNWPYGSG (77 aa)) is important for dimerization.

The protein belongs to the nuclear hormone receptor family. NR2 subfamily. In terms of assembly, binds DNA as dimer; homodimer and heterodimer with NR2F2 and probably NR2F1. Interacts with THRB.

Its subcellular location is the nucleus. Its function is as follows. Transcription factor predominantly involved in transcriptional repression. Binds to promoter/enhancer response elements that contain the imperfect 5'-AGGTCA-3' direct or inverted repeats with various spacings which are also recognized by other nuclear hormone receptors. Involved in modulation of hormonal responses. Represses transcriptional activity of the lutropin-choriogonadotropic hormone receptor/LHCGR gene, the renin/REN gene and the oxytocin-neurophysin/OXT gene. Represses the triiodothyronine-dependent and -independent transcriptional activity of the thyroid hormone receptor gene in a cell type-specific manner. The corepressing function towards thyroid hormone receptor beta/THRB involves at least in part the inhibition of THRB binding to triiodothyronine response elements (TREs) by NR2F6. Inhibits NFATC transcription factor DNA binding and subsequently its transcriptional activity. Acts as transcriptional repressor of IL-17 expression in Th-17 differentiated CD4(+) T cells and may be involved in induction and/or maintenance of peripheral immunological tolerance and autoimmunity. Involved in development of forebrain circadian clock; is required early in the development of the locus coeruleus (LC). This Rattus norvegicus (Rat) protein is Nuclear receptor subfamily 2 group F member 6 (Nr2f6).